Reading from the N-terminus, the 122-residue chain is Small ribosomal subunit protein bS16 (122 aa).

The segment at valine 87–alanine 122 is disordered.

This sequence belongs to the bacterial ribosomal protein bS16 family.

The protein is Small ribosomal subunit protein bS16 of Prochlorococcus marinus (strain MIT 9303).